A 386-amino-acid chain; its full sequence is NADH-ubiquinone oxidoreductase 49 kDa subunit homolog (386 aa).

Belongs to the complex I 49 kDa subunit family.

Its subcellular location is the mitochondrion. The catalysed reaction is a ubiquinone + NADH + 5 H(+)(in) = a ubiquinol + NAD(+) + 4 H(+)(out). Functionally, core subunit of the mitochondrial membrane respiratory chain NADH dehydrogenase (Complex I) that is believed to belong to the minimal assembly required for catalysis. Complex I functions in the transfer of electrons from NADH to the respiratory chain. The immediate electron acceptor for the enzyme is believed to be ubiquinone. Component of the iron-sulfur (IP) fragment of the enzyme. Component of the iron-sulfur (IP) fragment of the enzyme. In Trypanosoma brucei brucei, this protein is NADH-ubiquinone oxidoreductase 49 kDa subunit homolog (NAD7).